A 487-amino-acid polypeptide reads, in one-letter code: Glutamyl-tRNA(Gln) amidotransferase subunit A (487 aa).

Active-site charge relay system residues include K80 and S155. S179 serves as the catalytic Acyl-ester intermediate.

It belongs to the amidase family. GatA subfamily. In terms of assembly, heterotrimer of A, B and C subunits.

It catalyses the reaction L-glutamyl-tRNA(Gln) + L-glutamine + ATP + H2O = L-glutaminyl-tRNA(Gln) + L-glutamate + ADP + phosphate + H(+). In terms of biological role, allows the formation of correctly charged Gln-tRNA(Gln) through the transamidation of misacylated Glu-tRNA(Gln) in organisms which lack glutaminyl-tRNA synthetase. The reaction takes place in the presence of glutamine and ATP through an activated gamma-phospho-Glu-tRNA(Gln). In Chloroflexus aurantiacus (strain ATCC 29366 / DSM 635 / J-10-fl), this protein is Glutamyl-tRNA(Gln) amidotransferase subunit A.